Reading from the N-terminus, the 26-residue chain is MASRGALRRCLSPGLPRLLHLSRGLA.

In terms of assembly, interacts with protein kinase C eta as well as other protein kinases including PRKCD, PRKCQ and PRKCE but not with PRKCG or PRKCZ; the interactions lead to inhibition of kinase activity.

Product of an upstream open reading frame (ORF) of PRKCH which regulates translation of the downstream protein kinase C eta (PKC-eta) ORF. Functions as a repressive element that maintains low basal levels of PKC-eta in growing cells but enhances its expression during stress conditions induced by amino acid starvation in a EIF2AK4/GCN2-dependent manner. In addition to its role in regulating PKC-eta translation, also inhibits the kinase activity of PKC-eta as well as other protein kinases including PRKCD, PRKCQ and PRKCE but not PRKCA, PRKCG or PRKCZ. This chain is PRKCH upstream open reading frame 2, found in Homo sapiens (Human).